The sequence spans 506 residues: Mitogen-activated protein kinase 13 (506 aa).

The region spanning Tyr-13–Phe-304 is the Protein kinase domain. ATP is bound by residues Val-19–Val-27 and Lys-42. Residue Asp-139 is the Proton acceptor of the active site. At Thr-175 the chain carries Phosphothreonine. The short motif at Thr-175–Tyr-177 is the TXY element. Tyr-177 carries the phosphotyrosine modification. The segment at Tyr-384–Arg-421 is disordered.

This sequence belongs to the protein kinase superfamily. CMGC Ser/Thr protein kinase family. MAP kinase subfamily. Post-translationally, dually phosphorylated on Thr-175 and Tyr-177, which activates the enzyme.

The catalysed reaction is L-seryl-[protein] + ATP = O-phospho-L-seryl-[protein] + ADP + H(+). It carries out the reaction L-threonyl-[protein] + ATP = O-phospho-L-threonyl-[protein] + ADP + H(+). Its activity is regulated as follows. Activated by threonine and tyrosine phosphorylation. This Oryza sativa subsp. indica (Rice) protein is Mitogen-activated protein kinase 13 (MPK13).